Reading from the N-terminus, the 538-residue chain is Phosphoenolpyruvate carboxykinase (ATP) (538 aa).

Arg64 serves as a coordination point for substrate. Residues Asn149 and Phe151 each contribute to the Ca(2+) site. Tyr206 and Lys212 together coordinate substrate. Residues Lys212, His231, and 247–255 (GLSGTGKTT) each bind ATP. Lys212 and His231 together coordinate Mn(2+). Asp268 contributes to the Mn(2+) binding site. ATP-binding positions include Glu296, Arg332, 447-448 (RI), and Thr453. Arg332 contacts substrate.

It belongs to the phosphoenolpyruvate carboxykinase (ATP) family. As to quaternary structure, monomer. The cofactor is Mn(2+).

The protein localises to the cytoplasm. It carries out the reaction oxaloacetate + ATP = phosphoenolpyruvate + ADP + CO2. It participates in carbohydrate biosynthesis; gluconeogenesis. Its activity is regulated as follows. Allosterically activated by calcium. In terms of biological role, involved in the gluconeogenesis. Catalyzes the conversion of oxaloacetate (OAA) to phosphoenolpyruvate (PEP) through direct phosphoryl transfer between the nucleoside triphosphate and OAA. This chain is Phosphoenolpyruvate carboxykinase (ATP), found in Salmonella typhimurium (strain LT2 / SGSC1412 / ATCC 700720).